Reading from the N-terminus, the 479-residue chain is GMP reductase (479 aa).

CBS domains follow at residues 96–153 (VLDT…VRDI) and 154–212 (AVTD…ATDS). Residues 246–248 (DTA) and 296–298 (GVG) contribute to the NADP(+) site. Residue Cys303 is the Thioimidate intermediate of the active site.

This sequence belongs to the IMPDH/GMPR family. GuaB1 subfamily. A monovalent cation is required as a cofactor.

It carries out the reaction IMP + NH4(+) + NADP(+) = GMP + NADPH + 2 H(+). Its pathway is purine metabolism; IMP biosynthesis via salvage pathway. Its function is as follows. Involved in the purine-salvage pathway. Catalyzes the NADPH-dependent conversion of GMP to IMP. The protein is GMP reductase of Mycobacterium bovis (strain ATCC BAA-935 / AF2122/97).